Reading from the N-terminus, the 207-residue chain is Guanylate kinase (207 aa).

Residues 6-185 (GLLIVLSGPS…AKNRIQCIVE (180 aa)) form the Guanylate kinase-like domain. 13 to 20 (GPSGVGKG) contributes to the ATP binding site.

The protein belongs to the guanylate kinase family.

It localises to the cytoplasm. The enzyme catalyses GMP + ATP = GDP + ADP. Functionally, essential for recycling GMP and indirectly, cGMP. The sequence is that of Guanylate kinase from Staphylococcus aureus (strain Mu50 / ATCC 700699).